The chain runs to 436 residues: Small ribosomal subunit protein uS5m (436 aa).

Positions 152–218 constitute an S5 DRBM domain; that stretch reads FETYCLEVKR…GMASRKLFHV (67 aa). The tract at residues 417–436 is disordered; the sequence is GVEPMPLGIGLSHVVPKKDD.

This sequence belongs to the universal ribosomal protein uS5 family. As to quaternary structure, component of the mitochondrial ribosome small subunit (28S) which comprises a 12S rRNA and about 30 distinct proteins.

It is found in the mitochondrion. The chain is Small ribosomal subunit protein uS5m (mrps-5) from Caenorhabditis elegans.